Here is a 130-residue protein sequence, read N- to C-terminus: Small ribosomal subunit protein uS9 (130 aa).

The protein belongs to the universal ribosomal protein uS9 family.

In Xanthomonas campestris pv. campestris (strain 8004), this protein is Small ribosomal subunit protein uS9.